The primary structure comprises 115 residues: Somatostatin-1 (115 aa).

The first 24 residues, 1-24 (MQSCRVQCALTLLSLALAINSISA), serve as a signal peptide directing secretion. A propeptide spanning residues 25-99 (APTDPRLRQF…NSSPALAPRE (75 aa)) is cleaved from the precursor. Residues 60 to 79 (SQTDNEALESDDLPRGAEQD) form a disordered region. Cysteines 104 and 115 form a disulfide.

The protein belongs to the somatostatin family.

The protein localises to the secreted. Somatostatin inhibits the release of somatotropin. This chain is Somatostatin-1 (sst1), found in Pelophylax ridibundus (Marsh frog).